The following is a 153-amino-acid chain: MSKLNYKVETDPNKTARAMGRSLRISRKHTIEICREISGMKLDKAIAYLNRVIELKQVVPFKRHGKDVPHKKGKYGWTAGRFPQKASTQILSVLENAKKNAEYKGMNTEKLRIKHISSNKGFTIKRHMPRAFGRASPKNQETVHVQVILEEFY.

This sequence belongs to the universal ribosomal protein uL22 family. As to quaternary structure, part of the 50S ribosomal subunit.

Functionally, this protein binds specifically to 23S rRNA. It makes multiple contacts with different domains of the 23S rRNA in the assembled 50S subunit and ribosome. Its function is as follows. The globular domain of the protein is located near the polypeptide exit tunnel on the outside of the subunit, while an extended beta-hairpin is found that lines the wall of the exit tunnel in the center of the 70S ribosome. The chain is Large ribosomal subunit protein uL22 from Methanococcus aeolicus (strain ATCC BAA-1280 / DSM 17508 / OCM 812 / Nankai-3).